We begin with the raw amino-acid sequence, 486 residues long: Cardiolipin synthase A (486 aa).

Helical transmembrane passes span 3 to 23 and 38 to 58; these read TVYTLVSWLAILGYWLLIAGV and MAWLLIIYILPLVGIIAYLAV. 2 consecutive PLD phosphodiesterase domains span residues 219 to 246 and 399 to 426; these read MDLRQHRKMIMIDNYIAYTGSMNMVDPR and EGGLLHTKSVLVDGELSLVGTVNLDMRS. Active-site residues include His224, Lys226, Asp231, His404, Lys406, and Asp411.

The protein belongs to the phospholipase D family. Cardiolipin synthase subfamily. ClsA sub-subfamily.

It localises to the cell inner membrane. It carries out the reaction 2 a 1,2-diacyl-sn-glycero-3-phospho-(1'-sn-glycerol) = a cardiolipin + glycerol. Functionally, catalyzes the reversible phosphatidyl group transfer from one phosphatidylglycerol molecule to another to form cardiolipin (CL) (diphosphatidylglycerol) and glycerol. This Shigella boydii serotype 4 (strain Sb227) protein is Cardiolipin synthase A.